A 571-amino-acid polypeptide reads, in one-letter code: MRTSNYLLSTLKETPNDAEVVSHQLMLRAGMIRKLASGLYTWLPTGLRVLRKVENIVRQEIDNAGAVETLMPVVQPFELWEETGRSEKMGPELLRFTDRHTRPFVLSPTAEEVITSLVRNEVSSYKQLPLNLYQIQTKFRDERRPRFGVMRAREFCMMDAYSFDIDKEGLEKSYQAMHDAYCKAFDRMGLEYRPVLADSGAIGGSGSQEFHVLAESGEDLIAFSTESDYAANIEKAEAAAPAGERAEPTQEMTLVDTPNAKTIAELVEQHGLAIEKTVKTLFVKASDEVDADIIALIVRGDHELNEVKAENLPQVASPLEMATEEEMRALIGAGAGSLGPVGLELPFIVDRSVAVMSDFGAGANIDDKHYFGINWGRDVELGQVEDLRNVVEGDPSPCGQGTLMLKRGIEVGHIFQLGNVYSEAMNCGVLGPDGKNVILEMGCYGIGVSRVVASAIEQNHDKYGIIWPDALAPFQVAIVPMNMHKSEEVKEAAEKLYAELTAMGIEVLFDDRKERPGVMFSDMELIGIPHTIVIGDRSMKEGNFEYKNRRSGEKTAVAMADIVEHVKAQLQ.

The protein belongs to the class-II aminoacyl-tRNA synthetase family. ProS type 1 subfamily. Homodimer.

It is found in the cytoplasm. The catalysed reaction is tRNA(Pro) + L-proline + ATP = L-prolyl-tRNA(Pro) + AMP + diphosphate. Functionally, catalyzes the attachment of proline to tRNA(Pro) in a two-step reaction: proline is first activated by ATP to form Pro-AMP and then transferred to the acceptor end of tRNA(Pro). As ProRS can inadvertently accommodate and process non-cognate amino acids such as alanine and cysteine, to avoid such errors it has two additional distinct editing activities against alanine. One activity is designated as 'pretransfer' editing and involves the tRNA(Pro)-independent hydrolysis of activated Ala-AMP. The other activity is designated 'posttransfer' editing and involves deacylation of mischarged Ala-tRNA(Pro). The misacylated Cys-tRNA(Pro) is not edited by ProRS. This Vibrio campbellii (strain ATCC BAA-1116) protein is Proline--tRNA ligase.